The primary structure comprises 201 residues: Small ribosomal subunit protein uS2 (201 aa).

This sequence belongs to the universal ribosomal protein uS2 family. Part of the 50S ribosomal subunit.

The sequence is that of Small ribosomal subunit protein uS2 from Thermococcus kodakarensis (strain ATCC BAA-918 / JCM 12380 / KOD1) (Pyrococcus kodakaraensis (strain KOD1)).